A 345-amino-acid chain; its full sequence is MFSSLYPLARASLFKMDAEDAHHLTLRALGAAGRTGLACALSARVPDAPRTVMGLTFRNPVGLAAGLDKDGAAIDGLAALGFGFIEVGTVTPRAQPGNPRPRMFRLPQAEALINRMGFNNHGVDQFVKNVQAARYRGILGLNIGKNADTPIERAAEDYLYCLERVYPFASYVTINISSPNTKNLRQLQGAGELDALLAALKDKQQRLADLHGKLVPLALKIAPDLDDEQVKEIGDTLLRHKIEAVIATNTTLSRAAVQGLPHADEAGGLSGRPVFDASNEVIRKLHAEVGSEVPIIGVGGIFSGEDARAKLAAGAALVQLYTGFIYRGPALVSECVKAIARERTA.

FMN contacts are provided by residues 65–69 (AGLDK) and Thr89. Lys69 contributes to the substrate binding site. Position 114-118 (114-118 (NRMGF)) interacts with substrate. Residues Asn142 and Asn175 each contribute to the FMN site. Asn175 provides a ligand contact to substrate. Ser178 functions as the Nucleophile in the catalytic mechanism. Asn180 serves as a coordination point for substrate. Residues Lys220 and Thr248 each contribute to the FMN site. 249–250 (NT) contacts substrate. Residues Gly271, Gly300, and 321–322 (YT) each bind FMN.

The protein belongs to the dihydroorotate dehydrogenase family. Type 2 subfamily. Monomer. The cofactor is FMN.

Its subcellular location is the cell membrane. The catalysed reaction is (S)-dihydroorotate + a quinone = orotate + a quinol. It participates in pyrimidine metabolism; UMP biosynthesis via de novo pathway; orotate from (S)-dihydroorotate (quinone route): step 1/1. Its function is as follows. Catalyzes the conversion of dihydroorotate to orotate with quinone as electron acceptor. This chain is Dihydroorotate dehydrogenase (quinone), found in Burkholderia lata (strain ATCC 17760 / DSM 23089 / LMG 22485 / NCIMB 9086 / R18194 / 383).